A 95-amino-acid chain; its full sequence is Small ribosomal subunit protein uS19 (95 aa).

It belongs to the universal ribosomal protein uS19 family.

Functionally, protein S19 forms a complex with S13 that binds strongly to the 16S ribosomal RNA. In Thermosipho melanesiensis (strain DSM 12029 / CIP 104789 / BI429), this protein is Small ribosomal subunit protein uS19.